We begin with the raw amino-acid sequence, 44 residues long: Large ribosomal subunit protein bL34 (44 aa).

It belongs to the bacterial ribosomal protein bL34 family.

This is Large ribosomal subunit protein bL34 from Buchnera aphidicola subsp. Cinara cedri (strain Cc).